We begin with the raw amino-acid sequence, 189 residues long: Early E3 20.5 kDa glycoprotein (189 aa).

Residues Asn-73 and Asn-137 are each glycosylated (N-linked (GlcNAc...) asparagine; by host).

The protein belongs to the adenoviridae E3_20 family.

Functionally, E3 proteins seem to be dispensable for virus growth in tissue culture cells. They are potentially important for virus growth under special conditions; E3 region may help adenoviruses to evade the immune surveillance of the host. This is Early E3 20.5 kDa glycoprotein from Human adenovirus B serotype 3 (HAdV-3).